Here is a 601-residue protein sequence, read N- to C-terminus: Protein CT_858 (601 aa).

The protein belongs to the chlamydial CPn_1016/CT_858/TC_0248 family.

The chain is Protein CT_858 from Chlamydia trachomatis serovar D (strain ATCC VR-885 / DSM 19411 / UW-3/Cx).